Here is a 160-residue protein sequence, read N- to C-terminus: 6,7-dimethyl-8-ribityllumazine synthase (160 aa).

5-amino-6-(D-ribitylamino)uracil is bound by residues F23, 61–63 (SFE), and 85–87 (AVI). 90–91 (DT) is a (2S)-2-hydroxy-3-oxobutyl phosphate binding site. The active-site Proton donor is the H93. F118 lines the 5-amino-6-(D-ribitylamino)uracil pocket. R132 is a binding site for (2S)-2-hydroxy-3-oxobutyl phosphate.

This sequence belongs to the DMRL synthase family.

The catalysed reaction is (2S)-2-hydroxy-3-oxobutyl phosphate + 5-amino-6-(D-ribitylamino)uracil = 6,7-dimethyl-8-(1-D-ribityl)lumazine + phosphate + 2 H2O + H(+). It participates in cofactor biosynthesis; riboflavin biosynthesis; riboflavin from 2-hydroxy-3-oxobutyl phosphate and 5-amino-6-(D-ribitylamino)uracil: step 1/2. In terms of biological role, catalyzes the formation of 6,7-dimethyl-8-ribityllumazine by condensation of 5-amino-6-(D-ribitylamino)uracil with 3,4-dihydroxy-2-butanone 4-phosphate. This is the penultimate step in the biosynthesis of riboflavin. The sequence is that of 6,7-dimethyl-8-ribityllumazine synthase from Synechococcus sp. (strain CC9311).